Here is a 654-residue protein sequence, read N- to C-terminus: DNA ligase (654 aa).

NAD(+) is bound by residues 34–38 (DLEYD), 83–84 (SL), and Glu-114. The active-site N6-AMP-lysine intermediate is Lys-116. Residues Arg-137, Glu-171, Lys-280, and Lys-304 each contribute to the NAD(+) site. The Zn(2+) site is built by Cys-396, Cys-399, Cys-414, and Cys-419. Positions 577–654 (VISTILSGYT…EEQFYDLIKQ (78 aa)) constitute a BRCT domain.

This sequence belongs to the NAD-dependent DNA ligase family. LigA subfamily. The cofactor is Mg(2+). It depends on Mn(2+) as a cofactor.

It catalyses the reaction NAD(+) + (deoxyribonucleotide)n-3'-hydroxyl + 5'-phospho-(deoxyribonucleotide)m = (deoxyribonucleotide)n+m + AMP + beta-nicotinamide D-nucleotide.. In terms of biological role, DNA ligase that catalyzes the formation of phosphodiester linkages between 5'-phosphoryl and 3'-hydroxyl groups in double-stranded DNA using NAD as a coenzyme and as the energy source for the reaction. It is essential for DNA replication and repair of damaged DNA. In Mycoplasmopsis agalactiae (strain NCTC 10123 / CIP 59.7 / PG2) (Mycoplasma agalactiae), this protein is DNA ligase.